Here is a 364-residue protein sequence, read N- to C-terminus: Anhydro-N-acetylmuramic acid kinase (364 aa).

Residue 11–18 (GSSLDGID) participates in ATP binding.

This sequence belongs to the anhydro-N-acetylmuramic acid kinase family.

The catalysed reaction is 1,6-anhydro-N-acetyl-beta-muramate + ATP + H2O = N-acetyl-D-muramate 6-phosphate + ADP + H(+). Its pathway is amino-sugar metabolism; 1,6-anhydro-N-acetylmuramate degradation. The protein operates within cell wall biogenesis; peptidoglycan recycling. Its function is as follows. Catalyzes the specific phosphorylation of 1,6-anhydro-N-acetylmuramic acid (anhMurNAc) with the simultaneous cleavage of the 1,6-anhydro ring, generating MurNAc-6-P. Is required for the utilization of anhMurNAc either imported from the medium or derived from its own cell wall murein, and thus plays a role in cell wall recycling. The chain is Anhydro-N-acetylmuramic acid kinase from Pseudomonas syringae pv. tomato (strain ATCC BAA-871 / DC3000).